An 803-amino-acid polypeptide reads, in one-letter code: Translation initiation factor IF-2 (803 aa).

A compositionally biased stretch (basic and acidic residues) spans 65–75 (PDKVEEKKEHT). The disordered stretch occupies residues 65 to 186 (PDKVEEKKEH…PKSRKSKTLK (122 aa)). The segment covering 175 to 185 (NKPKSRKSKTL) has biased composition (basic residues). Positions 300-468 (IRPPVVTIMG…ILLTADAALE (169 aa)) constitute a tr-type G domain. The tract at residues 309–316 (GHVDHGKT) is G1. Residue 309-316 (GHVDHGKT) participates in GTP binding. A G2 region spans residues 334 to 338 (GITQH). The segment at 355-358 (DTPG) is G3. GTP-binding positions include 355–359 (DTPGH) and 409–412 (NKID). The interval 409–412 (NKID) is G4. The G5 stretch occupies residues 445 to 447 (SAK).

Belongs to the TRAFAC class translation factor GTPase superfamily. Classic translation factor GTPase family. IF-2 subfamily.

Its subcellular location is the cytoplasm. Functionally, one of the essential components for the initiation of protein synthesis. Protects formylmethionyl-tRNA from spontaneous hydrolysis and promotes its binding to the 30S ribosomal subunits. Also involved in the hydrolysis of GTP during the formation of the 70S ribosomal complex. This is Translation initiation factor IF-2 from Tropheryma whipplei (strain TW08/27) (Whipple's bacillus).